A 138-amino-acid polypeptide reads, in one-letter code: ATP synthase epsilon chain (138 aa).

It belongs to the ATPase epsilon chain family. In terms of assembly, F-type ATPases have 2 components, CF(1) - the catalytic core - and CF(0) - the membrane proton channel. CF(1) has five subunits: alpha(3), beta(3), gamma(1), delta(1), epsilon(1). CF(0) has three main subunits: a, b and c.

The protein localises to the cell inner membrane. In terms of biological role, produces ATP from ADP in the presence of a proton gradient across the membrane. The chain is ATP synthase epsilon chain from Idiomarina loihiensis (strain ATCC BAA-735 / DSM 15497 / L2-TR).